The following is a 188-amino-acid chain: Ribose 1,5-bisphosphate phosphokinase PhnN (188 aa).

An ATP-binding site is contributed by 9–16 (GPSGAGKD).

It belongs to the ribose 1,5-bisphosphokinase family.

The enzyme catalyses alpha-D-ribose 1,5-bisphosphate + ATP = 5-phospho-alpha-D-ribose 1-diphosphate + ADP. It functions in the pathway metabolic intermediate biosynthesis; 5-phospho-alpha-D-ribose 1-diphosphate biosynthesis; 5-phospho-alpha-D-ribose 1-diphosphate from D-ribose 5-phosphate (route II): step 3/3. Catalyzes the phosphorylation of ribose 1,5-bisphosphate to 5-phospho-D-ribosyl alpha-1-diphosphate (PRPP). In Pectobacterium parmentieri (strain WPP163) (Pectobacterium wasabiae (strain WPP163)), this protein is Ribose 1,5-bisphosphate phosphokinase PhnN.